The sequence spans 407 residues: Probable tRNA sulfurtransferase (407 aa).

The 105-residue stretch at 61-165 (NEITYRLSKI…LDAIYMYEEV (105 aa)) folds into the THUMP domain. ATP contacts are provided by residues 183–184 (ML), 208–209 (HF), Arg265, Gly287, and Gln296.

Belongs to the ThiI family.

It localises to the cytoplasm. It catalyses the reaction [ThiI sulfur-carrier protein]-S-sulfanyl-L-cysteine + a uridine in tRNA + 2 reduced [2Fe-2S]-[ferredoxin] + ATP + H(+) = [ThiI sulfur-carrier protein]-L-cysteine + a 4-thiouridine in tRNA + 2 oxidized [2Fe-2S]-[ferredoxin] + AMP + diphosphate. It carries out the reaction [ThiS sulfur-carrier protein]-C-terminal Gly-Gly-AMP + S-sulfanyl-L-cysteinyl-[cysteine desulfurase] + AH2 = [ThiS sulfur-carrier protein]-C-terminal-Gly-aminoethanethioate + L-cysteinyl-[cysteine desulfurase] + A + AMP + 2 H(+). It participates in cofactor biosynthesis; thiamine diphosphate biosynthesis. Catalyzes the ATP-dependent transfer of a sulfur to tRNA to produce 4-thiouridine in position 8 of tRNAs, which functions as a near-UV photosensor. Also catalyzes the transfer of sulfur to the sulfur carrier protein ThiS, forming ThiS-thiocarboxylate. This is a step in the synthesis of thiazole, in the thiamine biosynthesis pathway. The sulfur is donated as persulfide by IscS. This is Probable tRNA sulfurtransferase from Staphylococcus aureus (strain Mu3 / ATCC 700698).